A 404-amino-acid chain; its full sequence is Cysteine desulfurase IscS (404 aa).

Residues 75 to 76 (AT), asparagine 155, glutamine 183, and 203 to 205 (SAH) contribute to the pyridoxal 5'-phosphate site. Lysine 206 carries the N6-(pyridoxal phosphate)lysine modification. Threonine 243 contributes to the pyridoxal 5'-phosphate binding site. Cysteine 328 serves as the catalytic Cysteine persulfide intermediate. [2Fe-2S] cluster is bound at residue cysteine 328.

This sequence belongs to the class-V pyridoxal-phosphate-dependent aminotransferase family. NifS/IscS subfamily. As to quaternary structure, homodimer. Forms a heterotetramer with IscU, interacts with other sulfur acceptors. The cofactor is pyridoxal 5'-phosphate.

The protein localises to the cytoplasm. The catalysed reaction is (sulfur carrier)-H + L-cysteine = (sulfur carrier)-SH + L-alanine. It participates in cofactor biosynthesis; iron-sulfur cluster biosynthesis. Master enzyme that delivers sulfur to a number of partners involved in Fe-S cluster assembly, tRNA modification or cofactor biosynthesis. Catalyzes the removal of elemental sulfur atoms from cysteine to produce alanine. Functions as a sulfur delivery protein for Fe-S cluster synthesis onto IscU, an Fe-S scaffold assembly protein, as well as other S acceptor proteins. The sequence is that of Cysteine desulfurase IscS from Aeromonas hydrophila subsp. hydrophila (strain ATCC 7966 / DSM 30187 / BCRC 13018 / CCUG 14551 / JCM 1027 / KCTC 2358 / NCIMB 9240 / NCTC 8049).